We begin with the raw amino-acid sequence, 118 residues long: Large ribosomal subunit protein bL20 (118 aa).

The protein belongs to the bacterial ribosomal protein bL20 family.

Its function is as follows. Binds directly to 23S ribosomal RNA and is necessary for the in vitro assembly process of the 50S ribosomal subunit. It is not involved in the protein synthesizing functions of that subunit. This Alteromonas mediterranea (strain DSM 17117 / CIP 110805 / LMG 28347 / Deep ecotype) protein is Large ribosomal subunit protein bL20.